The following is a 356-amino-acid chain: Tyrosine recombinase XerS (356 aa).

The region spanning 16–121 (IMPWYVLDYY…ALSSLYKYLT (106 aa)) is the Core-binding (CB) domain. In terms of domain architecture, Tyr recombinase spans 169–354 (AFLDYVDKEY…VNDEQKNALD (186 aa)). Residues R210, K234, H306, R309, and H332 contribute to the active site. Y341 serves as the catalytic O-(3'-phospho-DNA)-tyrosine intermediate.

The protein belongs to the 'phage' integrase family. XerS subfamily.

The protein localises to the cytoplasm. Its activity is regulated as follows. FtsK is required for recombination. Site-specific tyrosine recombinase, which acts by catalyzing the cutting and rejoining of the recombining DNA molecules. Essential to convert dimers of the bacterial chromosome into monomers to permit their segregation at cell division. The sequence is that of Tyrosine recombinase XerS from Streptococcus pyogenes serotype M2 (strain MGAS10270).